A 463-amino-acid chain; its full sequence is Phosphoglucosamine mutase (463 aa).

Residue Ser102 is the Phosphoserine intermediate of the active site. The Mg(2+) site is built by Ser102, Asp240, Asp242, and Asp244. Ser102 is modified (phosphoserine).

This sequence belongs to the phosphohexose mutase family. Mg(2+) is required as a cofactor. Activated by phosphorylation.

It catalyses the reaction alpha-D-glucosamine 1-phosphate = D-glucosamine 6-phosphate. Functionally, catalyzes the conversion of glucosamine-6-phosphate to glucosamine-1-phosphate. This Mycobacterium leprae (strain Br4923) protein is Phosphoglucosamine mutase.